Reading from the N-terminus, the 186-residue chain is Small ribosomal subunit protein uS5 (186 aa).

Positions 18-81 (FVDKLVHINR…EAAKRAMIRV (64 aa)) constitute an S5 DRBM domain.

The protein belongs to the universal ribosomal protein uS5 family. Part of the 30S ribosomal subunit. Contacts proteins S4 and S8.

With S4 and S12 plays an important role in translational accuracy. In terms of biological role, located at the back of the 30S subunit body where it stabilizes the conformation of the head with respect to the body. The sequence is that of Small ribosomal subunit protein uS5 from Parvibaculum lavamentivorans (strain DS-1 / DSM 13023 / NCIMB 13966).